The primary structure comprises 492 residues: Fascin-2 (492 aa).

This sequence belongs to the fascin family. Localized specifically in the outer and inner segments of the photoreceptor cells in the retina.

It localises to the cytoplasm. The protein localises to the cytoskeleton. It is found in the cell projection. The protein resides in the stereocilium. Functionally, acts as an actin bundling protein. May play a pivotal role in photoreceptor cell-specific events, such as disk morphogenesis. The chain is Fascin-2 (FSCN2) from Homo sapiens (Human).